The primary structure comprises 389 residues: Phospho-N-acetylmuramoyl-pentapeptide-transferase (389 aa).

Helical transmembrane passes span 21-41 (YITMRAVLACATALLIGLVAG), 71-91 (TPTMGGALILIAVAISTLLWA), 97-117 (FVWVVLLVTFGFGWIGWMDDY), 134-154 (FFWQATIGLVAAVYLAFAVSA), 167-187 (WVSSGFAMPLPTRADLIVPFF), 190-210 (VSYPLGVLGFVALTWAVIVGT), 222-242 (GLAIMPTVMVGSALGIFAYVV), 259-279 (AAELMVLCAAIAGAGLAFLWF), 286-306 (VFMGDVGALALGGALGTIAVI), 311-331 (IVLFIMGGVFVVETLSVMMQV), and 366-386 (QVVVRFWIISMMLVLIGLSTL).

This sequence belongs to the glycosyltransferase 4 family. MraY subfamily. Mg(2+) serves as cofactor.

It is found in the cell inner membrane. The catalysed reaction is UDP-N-acetyl-alpha-D-muramoyl-L-alanyl-gamma-D-glutamyl-meso-2,6-diaminopimeloyl-D-alanyl-D-alanine + di-trans,octa-cis-undecaprenyl phosphate = di-trans,octa-cis-undecaprenyl diphospho-N-acetyl-alpha-D-muramoyl-L-alanyl-D-glutamyl-meso-2,6-diaminopimeloyl-D-alanyl-D-alanine + UMP. It functions in the pathway cell wall biogenesis; peptidoglycan biosynthesis. Functionally, catalyzes the initial step of the lipid cycle reactions in the biosynthesis of the cell wall peptidoglycan: transfers peptidoglycan precursor phospho-MurNAc-pentapeptide from UDP-MurNAc-pentapeptide onto the lipid carrier undecaprenyl phosphate, yielding undecaprenyl-pyrophosphoryl-MurNAc-pentapeptide, known as lipid I. The sequence is that of Phospho-N-acetylmuramoyl-pentapeptide-transferase from Bordetella petrii (strain ATCC BAA-461 / DSM 12804 / CCUG 43448).